A 398-amino-acid polypeptide reads, in one-letter code: 4-hydroxy-3-methylbut-2-enyl diphosphate reductase (398 aa).

C66 lines the [4Fe-4S] cluster pocket. H96 is a binding site for (2E)-4-hydroxy-3-methylbut-2-enyl diphosphate. A dimethylallyl diphosphate-binding site is contributed by H96. Residue H96 participates in isopentenyl diphosphate binding. C157 serves as a coordination point for [4Fe-4S] cluster. H185 is a binding site for (2E)-4-hydroxy-3-methylbut-2-enyl diphosphate. Position 185 (H185) interacts with dimethylallyl diphosphate. An isopentenyl diphosphate-binding site is contributed by H185. E187 (proton donor) is an active-site residue. T250 contacts (2E)-4-hydroxy-3-methylbut-2-enyl diphosphate. A [4Fe-4S] cluster-binding site is contributed by C288. (2E)-4-hydroxy-3-methylbut-2-enyl diphosphate contacts are provided by S317, S318, N319, and S380. The dimethylallyl diphosphate site is built by S317, S318, N319, and S380. The isopentenyl diphosphate site is built by S317, S318, N319, and S380.

Belongs to the IspH family. It depends on [4Fe-4S] cluster as a cofactor.

It catalyses the reaction isopentenyl diphosphate + 2 oxidized [2Fe-2S]-[ferredoxin] + H2O = (2E)-4-hydroxy-3-methylbut-2-enyl diphosphate + 2 reduced [2Fe-2S]-[ferredoxin] + 2 H(+). The enzyme catalyses dimethylallyl diphosphate + 2 oxidized [2Fe-2S]-[ferredoxin] + H2O = (2E)-4-hydroxy-3-methylbut-2-enyl diphosphate + 2 reduced [2Fe-2S]-[ferredoxin] + 2 H(+). It functions in the pathway isoprenoid biosynthesis; dimethylallyl diphosphate biosynthesis; dimethylallyl diphosphate from (2E)-4-hydroxy-3-methylbutenyl diphosphate: step 1/1. The protein operates within isoprenoid biosynthesis; isopentenyl diphosphate biosynthesis via DXP pathway; isopentenyl diphosphate from 1-deoxy-D-xylulose 5-phosphate: step 6/6. In terms of biological role, catalyzes the conversion of 1-hydroxy-2-methyl-2-(E)-butenyl 4-diphosphate (HMBPP) into a mixture of isopentenyl diphosphate (IPP) and dimethylallyl diphosphate (DMAPP). Acts in the terminal step of the DOXP/MEP pathway for isoprenoid precursor biosynthesis. This Prochlorococcus marinus subsp. pastoris (strain CCMP1986 / NIES-2087 / MED4) protein is 4-hydroxy-3-methylbut-2-enyl diphosphate reductase.